We begin with the raw amino-acid sequence, 295 residues long: Protein LplC (295 aa).

A run of 6 helical transmembrane segments spans residues 21 to 41 (ILFL…IIAG), 81 to 101 (VSIF…FTMA), 116 to 136 (LNLV…YLVV), 142 to 162 (LDTY…LIII), 199 to 219 (VIAT…FHAL), and 260 to 280 (GIKL…YPFL). The 202-residue stretch at 79 to 280 (MGVSIFITVV…LPILAVYPFL (202 aa)) folds into the ABC transmembrane type-1 domain.

Belongs to the binding-protein-dependent transport system permease family. CysTW subfamily.

The protein localises to the cell membrane. The protein is Protein LplC (lplC) of Bacillus subtilis (strain 168).